A 251-amino-acid chain; its full sequence is Ubiquinone/menaquinone biosynthesis C-methyltransferase UbiE (251 aa).

Residues T74, D95, 123–124 (NA), and S140 each bind S-adenosyl-L-methionine.

It belongs to the class I-like SAM-binding methyltransferase superfamily. MenG/UbiE family.

The catalysed reaction is a 2-demethylmenaquinol + S-adenosyl-L-methionine = a menaquinol + S-adenosyl-L-homocysteine + H(+). It carries out the reaction a 2-methoxy-6-(all-trans-polyprenyl)benzene-1,4-diol + S-adenosyl-L-methionine = a 5-methoxy-2-methyl-3-(all-trans-polyprenyl)benzene-1,4-diol + S-adenosyl-L-homocysteine + H(+). The protein operates within quinol/quinone metabolism; menaquinone biosynthesis; menaquinol from 1,4-dihydroxy-2-naphthoate: step 2/2. Its pathway is cofactor biosynthesis; ubiquinone biosynthesis. Functionally, methyltransferase required for the conversion of demethylmenaquinol (DMKH2) to menaquinol (MKH2) and the conversion of 2-polyprenyl-6-methoxy-1,4-benzoquinol (DDMQH2) to 2-polyprenyl-3-methyl-6-methoxy-1,4-benzoquinol (DMQH2). This chain is Ubiquinone/menaquinone biosynthesis C-methyltransferase UbiE, found in Salmonella paratyphi A (strain AKU_12601).